Reading from the N-terminus, the 325-residue chain is NADH-quinone oxidoreductase subunit H (325 aa).

Helical transmembrane passes span 11-31, 81-101, 114-134, 154-174, 186-206, 237-257, 265-285, and 304-324; these read ILLTILKAVVILLVVVTCGAF, VIFTLAPMIAFTSLLLAFAIV, IGILFFLMMAGLAVYAVLFAG, LSYEVFLGLSLMGVVAQAGSF, VWNVIPQFFGFITFAIAGVAV, FFVGEYIGIVTISALMVTLFF, LPPFIWFALKTAFFMMMFILI, and ICLPLTLINLLVTAAVILWQA.

Belongs to the complex I subunit 1 family. As to quaternary structure, NDH-1 is composed of 13 different subunits. Subunits NuoA, H, J, K, L, M, N constitute the membrane sector of the complex.

It localises to the cell inner membrane. The catalysed reaction is a quinone + NADH + 5 H(+)(in) = a quinol + NAD(+) + 4 H(+)(out). NDH-1 shuttles electrons from NADH, via FMN and iron-sulfur (Fe-S) centers, to quinones in the respiratory chain. The immediate electron acceptor for the enzyme in this species is believed to be ubiquinone. Couples the redox reaction to proton translocation (for every two electrons transferred, four hydrogen ions are translocated across the cytoplasmic membrane), and thus conserves the redox energy in a proton gradient. This subunit may bind ubiquinone. The sequence is that of NADH-quinone oxidoreductase subunit H from Escherichia fergusonii (strain ATCC 35469 / DSM 13698 / CCUG 18766 / IAM 14443 / JCM 21226 / LMG 7866 / NBRC 102419 / NCTC 12128 / CDC 0568-73).